A 114-amino-acid chain; its full sequence is Vacuolar morphogenesis protein 10 (114 aa).

It localises to the vacuole membrane. In terms of biological role, required for vacuolar fusion. Involved in the early steps of the fusion pathway. This is Vacuolar morphogenesis protein 10 (VAM10) from Saccharomyces cerevisiae (strain ATCC 204508 / S288c) (Baker's yeast).